A 549-amino-acid polypeptide reads, in one-letter code: Cation/acetate symporter ActP (549 aa).

Transmembrane regions (helical) follow at residues 33–53 (WQAI…TYWA), 77–97 (LAIA…ALVF), 103–123 (GLIY…LIAE), 148–168 (ILSA…QMVG), 183–203 (IAVV…GMLA), 206–226 (WVQI…AFMV), 262–282 (ISAL…PHIL), 303–323 (GFMG…IMLV), 355–375 (LFLG…VAGL), 404–424 (VSKI…ILFE), 428–448 (IAFM…PIIL), 464–484 (GGWL…TIWV), and 493–513 (IFPY…GIWF).

This sequence belongs to the sodium:solute symporter (SSF) (TC 2.A.21) family.

It is found in the cell inner membrane. Its function is as follows. Transports acetate. The protein is Cation/acetate symporter ActP of Salmonella newport (strain SL254).